Here is a 264-residue protein sequence, read N- to C-terminus: NAD kinase 1 (264 aa).

D45 (proton acceptor) is an active-site residue. NAD(+) is bound by residues 45–46 (DG), G46, 122–123 (NE), R148, D150, S158, 161–166 (TAYNKS), and H223.

Belongs to the NAD kinase family. In terms of assembly, homotetramer. A divalent metal cation serves as cofactor.

It localises to the cytoplasm. It catalyses the reaction NAD(+) + ATP = ADP + NADP(+) + H(+). Its activity is regulated as follows. Competitively inhibited by 5'-thioacetyladenosine (TAA) and di-(5'-thioadenosine) (DTA). In terms of biological role, involved in the regulation of the intracellular balance of NAD and NADP, and is a key enzyme in the biosynthesis of NADP. Catalyzes specifically the phosphorylation on 2'-hydroxyl of the adenosine moiety of NAD to yield NADP. The protein is NAD kinase 1 of Listeria monocytogenes serovar 1/2a (strain ATCC BAA-679 / EGD-e).